The chain runs to 370 residues: Putative glutamate--cysteine ligase 2 (370 aa).

It belongs to the glutamate--cysteine ligase type 2 family. YbdK subfamily.

It catalyses the reaction L-cysteine + L-glutamate + ATP = gamma-L-glutamyl-L-cysteine + ADP + phosphate + H(+). Functionally, ATP-dependent carboxylate-amine ligase which exhibits weak glutamate--cysteine ligase activity. The polypeptide is Putative glutamate--cysteine ligase 2 (Janthinobacterium sp. (strain Marseille) (Minibacterium massiliensis)).